A 207-amino-acid polypeptide reads, in one-letter code: dITP/XTP pyrophosphatase (207 aa).

Substrate is bound at residue 7 to 12; the sequence is SNNAKK. Asp-72 (proton acceptor) is an active-site residue. Asp-72 is a binding site for Mg(2+). Residues Ser-73, 155 to 158, Lys-184, and 189 to 190 each bind substrate; these read FGYD and HR.

Belongs to the HAM1 NTPase family. As to quaternary structure, homodimer. Requires Mg(2+) as cofactor.

It carries out the reaction XTP + H2O = XMP + diphosphate + H(+). It catalyses the reaction dITP + H2O = dIMP + diphosphate + H(+). The catalysed reaction is ITP + H2O = IMP + diphosphate + H(+). Functionally, pyrophosphatase that catalyzes the hydrolysis of nucleoside triphosphates to their monophosphate derivatives, with a high preference for the non-canonical purine nucleotides XTP (xanthosine triphosphate), dITP (deoxyinosine triphosphate) and ITP. Seems to function as a house-cleaning enzyme that removes non-canonical purine nucleotides from the nucleotide pool, thus preventing their incorporation into DNA/RNA and avoiding chromosomal lesions. This Corynebacterium efficiens (strain DSM 44549 / YS-314 / AJ 12310 / JCM 11189 / NBRC 100395) protein is dITP/XTP pyrophosphatase.